We begin with the raw amino-acid sequence, 265 residues long: Dehydrin COR47 (265 aa).

Basic and acidic residues predominate over residues 1–14 (MAEEYKNNVPEHET). The tract at residues 1 to 265 (MAEEYKNNVP…EVKKEKESDD (265 aa)) is disordered. At Ala2 the chain carries N-acetylalanine. Residues 16 to 28 (TVATEESPATTTE) are compositionally biased toward polar residues. Basic and acidic residues predominate over residues 29-47 (VTDRGLFDFLGKKEEEVKP). Phosphoserine is present on Ser64. Over residues 69–79 (AAEHEEVKENK) the composition is skewed to basic and acidic residues. Thr90 carries the post-translational modification Phosphothreonine. Composition is skewed to basic and acidic residues over residues 96-105 (NKPSVIEKLH) and 129-156 (IVEGEEDKKGLVEKIKEKLPGHHDKTAE). Residues 133 to 153 (EEDKKGLVEKIKEKLPGHHDK) form repeat 1. The interval 133-251 (EEDKKGLVEK…KEKLPGYHAK (119 aa)) is 3 X 21 AA repeats, Lys-rich. Positions 160 to 172 (PVSTTIPVPVSES) are enriched in low complexity. Composition is skewed to basic and acidic residues over residues 173-204 (VVEHDHPEEEKKGLVEKIKEKLPGHHDEKAED) and 227-265 (PVEHPEEKKGILEKIKEKLPGYHAKTTEEEVKKEKESDD). 2 repeat units span residues 180 to 200 (EEEKKGLVEKIKEKLPGHHDE) and 231 to 251 (PEEKKGILEKIKEKLPGYHAK).

It belongs to the plant dehydrin family.

This is Dehydrin COR47 (COR47) from Arabidopsis thaliana (Mouse-ear cress).